The following is a 727-amino-acid chain: Elongation factor 2 (727 aa).

The region spanning 19 to 260 is the tr-type G domain; the sequence is DQIRNIGICA…MVVTHLPNPV (242 aa). Residues 28–35, 94–98, and 148–151 contribute to the GTP site; these read AHIDHGKT, DTPGH, and NKVD. Diphthamide is present on His603.

It belongs to the TRAFAC class translation factor GTPase superfamily. Classic translation factor GTPase family. EF-G/EF-2 subfamily.

It localises to the cytoplasm. Its function is as follows. Catalyzes the GTP-dependent ribosomal translocation step during translation elongation. During this step, the ribosome changes from the pre-translocational (PRE) to the post-translocational (POST) state as the newly formed A-site-bound peptidyl-tRNA and P-site-bound deacylated tRNA move to the P and E sites, respectively. Catalyzes the coordinated movement of the two tRNA molecules, the mRNA and conformational changes in the ribosome. This Methanococcus aeolicus (strain ATCC BAA-1280 / DSM 17508 / OCM 812 / Nankai-3) protein is Elongation factor 2.